A 553-amino-acid polypeptide reads, in one-letter code: CTP synthase (553 aa).

The amidoligase domain stretch occupies residues 1 to 270; sequence MTKYVFVTGG…DDLICRELEL (270 aa). Ser13 lines the CTP pocket. Ser13 contributes to the UTP binding site. ATP is bound by residues 14–19 and Asp71; that span reads SLGKGI. Asp71 and Glu144 together coordinate Mg(2+). CTP-binding positions include 151 to 153, 191 to 196, and Lys227; these read DIE and KTKPTQ. Residues 191 to 196 and Lys227 each bind UTP; that span reads KTKPTQ. The Glutamine amidotransferase type-1 domain occupies 295 to 547; that stretch reads TIGMVGKYVE…IKAALIHQDA (253 aa). Position 356 (Gly356) interacts with L-glutamine. Residue Cys383 is the Nucleophile; for glutamine hydrolysis of the active site. L-glutamine contacts are provided by residues 384-387, Glu407, and Arg473; that span reads LGMQ. Catalysis depends on residues His520 and Glu522.

The protein belongs to the CTP synthase family. As to quaternary structure, homotetramer.

It carries out the reaction UTP + L-glutamine + ATP + H2O = CTP + L-glutamate + ADP + phosphate + 2 H(+). The catalysed reaction is L-glutamine + H2O = L-glutamate + NH4(+). The enzyme catalyses UTP + NH4(+) + ATP = CTP + ADP + phosphate + 2 H(+). The protein operates within pyrimidine metabolism; CTP biosynthesis via de novo pathway; CTP from UDP: step 2/2. With respect to regulation, allosterically activated by GTP, when glutamine is the substrate; GTP has no effect on the reaction when ammonia is the substrate. The allosteric effector GTP functions by stabilizing the protein conformation that binds the tetrahedral intermediate(s) formed during glutamine hydrolysis. Inhibited by the product CTP, via allosteric rather than competitive inhibition. Catalyzes the ATP-dependent amination of UTP to CTP with either L-glutamine or ammonia as the source of nitrogen. Regulates intracellular CTP levels through interactions with the four ribonucleotide triphosphates. The sequence is that of CTP synthase from Polynucleobacter asymbioticus (strain DSM 18221 / CIP 109841 / QLW-P1DMWA-1) (Polynucleobacter necessarius subsp. asymbioticus).